The following is a 631-amino-acid chain: Altered inheritance of mitochondria protein 9, mitochondrial (631 aa).

A mitochondrion-targeting transit peptide spans 1 to 41 (MLSRVVRQRSRSAISSFKLRAHAAFAETRIGVGISVQATRL).

This sequence belongs to the AIM9 family.

The protein localises to the mitochondrion. The sequence is that of Altered inheritance of mitochondria protein 9, mitochondrial (AIM9) from Scheffersomyces stipitis (strain ATCC 58785 / CBS 6054 / NBRC 10063 / NRRL Y-11545) (Yeast).